The following is a 1017-amino-acid chain: DNA polymerase (1017 aa).

Belongs to the DNA polymerase type-B family. In terms of assembly, heterodimer with the terminal protein; this heterodimer binds to bp 9 to 18 of the genome. Forms a complex with viral pTP, DBP and hosts NFIA and POU2F1/OCT1 for initiation of replication.

The protein resides in the host nucleus. It carries out the reaction DNA(n) + a 2'-deoxyribonucleoside 5'-triphosphate = DNA(n+1) + diphosphate. In terms of biological role, eukaryotic-type DNA polymerase involved in viral genomic replication. DNA synthesis is protein primed, and acts in a strand displacement replication. Assembles in complex with viral pTP, DBP, host NFIA and host POU2F1/OCT1 on viral origin of replication. The polymerase covalently transfers dCMP onto pTP, thereby initiating complementary strand synthesis. The sequence is that of DNA polymerase from Bovine adenovirus 2 (BAdV-2).